The sequence spans 287 residues: ATP synthase gamma chain (287 aa).

Belongs to the ATPase gamma chain family. As to quaternary structure, F-type ATPases have 2 components, CF(1) - the catalytic core - and CF(0) - the membrane proton channel. CF(1) has five subunits: alpha(3), beta(3), gamma(1), delta(1), epsilon(1). CF(0) has three main subunits: a, b and c.

It is found in the cell inner membrane. Produces ATP from ADP in the presence of a proton gradient across the membrane. The gamma chain is believed to be important in regulating ATPase activity and the flow of protons through the CF(0) complex. The sequence is that of ATP synthase gamma chain from Citrobacter koseri (strain ATCC BAA-895 / CDC 4225-83 / SGSC4696).